We begin with the raw amino-acid sequence, 643 residues long: Alpha-dioxygenase 1 (643 aa).

Residue H167 is the Proton acceptor of the active site. D168 is a Ca(2+) binding site. H172 contributes to the heme b binding site. Ca(2+) contacts are provided by T220, W222, D224, and S226. H392, R489, and R493 together coordinate heme b.

It belongs to the peroxidase family. Heme b is required as a cofactor. It depends on Ca(2+) as a cofactor.

Alpha-dioxygenase that catalyzes the primary oxygenation step of a variety of 14-20 carbon fatty acids, containing up to three unsaturated bonds, into their corresponding 2R-hydroperoxides. Involved in the production of oxylipins that function in cell signaling, wound healing, and protection from infection. The lipid-derived signaling pathway is involved in the initial response of hot pepper plants to pathogen infection. The protein is Alpha-dioxygenase 1 of Capsicum annuum (Capsicum pepper).